Reading from the N-terminus, the 441-residue chain is Ribosomal protein uS12 methylthiotransferase RimO (441 aa).

Residues 7 to 117 (PKVSFVSLGC…VLDAVHRALP (111 aa)) enclose the MTTase N-terminal domain. Residues C16, C52, C81, C148, C152, and C155 each coordinate [4Fe-4S] cluster. In terms of domain architecture, Radical SAM core spans 134-371 (LTPRHYAYLK…MARQQKISAR (238 aa)). In terms of domain architecture, TRAM spans 374 to 440 (KRKVGTRQQV…AYDLHGSVAG (67 aa)).

Belongs to the methylthiotransferase family. RimO subfamily. [4Fe-4S] cluster is required as a cofactor.

It localises to the cytoplasm. It carries out the reaction L-aspartate(89)-[ribosomal protein uS12]-hydrogen + (sulfur carrier)-SH + AH2 + 2 S-adenosyl-L-methionine = 3-methylsulfanyl-L-aspartate(89)-[ribosomal protein uS12]-hydrogen + (sulfur carrier)-H + 5'-deoxyadenosine + L-methionine + A + S-adenosyl-L-homocysteine + 2 H(+). Functionally, catalyzes the methylthiolation of an aspartic acid residue of ribosomal protein uS12. The protein is Ribosomal protein uS12 methylthiotransferase RimO of Rhodopseudomonas palustris (strain BisB18).